The chain runs to 607 residues: Elongation factor 4 (607 aa).

The tr-type G domain occupies 11–193; the sequence is EKIRNFSIIA…QIVEKVPAPT (183 aa). Residues 23–28 and 140–143 each bind GTP; these read DHGKST and NKID.

Belongs to the TRAFAC class translation factor GTPase superfamily. Classic translation factor GTPase family. LepA subfamily.

The protein localises to the cell membrane. It catalyses the reaction GTP + H2O = GDP + phosphate + H(+). Its function is as follows. Required for accurate and efficient protein synthesis under certain stress conditions. May act as a fidelity factor of the translation reaction, by catalyzing a one-codon backward translocation of tRNAs on improperly translocated ribosomes. Back-translocation proceeds from a post-translocation (POST) complex to a pre-translocation (PRE) complex, thus giving elongation factor G a second chance to translocate the tRNAs correctly. Binds to ribosomes in a GTP-dependent manner. The chain is Elongation factor 4 from Streptococcus pneumoniae serotype 19F (strain G54).